The sequence spans 129 residues: ATP synthase epsilon chain (129 aa).

The protein belongs to the ATPase epsilon chain family. F-type ATPases have 2 components, CF(1) - the catalytic core - and CF(0) - the membrane proton channel. CF(1) has five subunits: alpha(3), beta(3), gamma(1), delta(1), epsilon(1). CF(0) has three main subunits: a, b and c.

It is found in the cell inner membrane. Produces ATP from ADP in the presence of a proton gradient across the membrane. The polypeptide is ATP synthase epsilon chain (Campylobacter fetus subsp. fetus (strain 82-40)).